The primary structure comprises 351 residues: uncharacterized protein (351 aa).

Residues D215, D226, H290, E319, and E333 each contribute to the Mn(2+) site.

It belongs to the peptidase M24B family. The cofactor is Mn(2+).

This is an uncharacterized protein from Staphylococcus aureus (strain USA300).